We begin with the raw amino-acid sequence, 160 residues long: Deoxyuridine 5'-triphosphate nucleotidohydrolase (160 aa).

8 residues coordinate dUMP: serine 80, glycine 93, aspartate 96, tyrosine 99, lysine 104, arginine 149, phenylalanine 154, and glycine 155.

This sequence belongs to the dUTPase family. As to quaternary structure, homotrimer. Requires Mg(2+) as cofactor.

It carries out the reaction dUTP + H2O = dUMP + diphosphate + H(+). It functions in the pathway pyrimidine metabolism; dUMP biosynthesis; dUMP from dCTP (dUTP route): step 2/2. In terms of biological role, involved in nucleotide metabolism via production of dUMP, the immediate precursor of thymidine nucleotides, and decreases the intracellular concentration of dUTP so that uracil cannot be incorporated into DNA. In Debaryomyces hansenii (strain ATCC 36239 / CBS 767 / BCRC 21394 / JCM 1990 / NBRC 0083 / IGC 2968) (Yeast), this protein is Deoxyuridine 5'-triphosphate nucleotidohydrolase (DUT1).